The chain runs to 249 residues: Aliphatic sulfonates import ATP-binding protein SsuB 2 (249 aa).

Residues Leu5–Ala233 form the ABC transporter domain. Gly37 to Ser44 is an ATP binding site.

The protein belongs to the ABC transporter superfamily. Aliphatic sulfonates importer (TC 3.A.1.17.2) family. As to quaternary structure, the complex is composed of two ATP-binding proteins (SsuB), two transmembrane proteins (SsuC) and a solute-binding protein (SsuA).

It is found in the cell inner membrane. It carries out the reaction ATP + H2O + aliphatic sulfonate-[sulfonate-binding protein]Side 1 = ADP + phosphate + aliphatic sulfonateSide 2 + [sulfonate-binding protein]Side 1.. In terms of biological role, part of the ABC transporter complex SsuABC involved in aliphatic sulfonates import. Responsible for energy coupling to the transport system. This Pseudomonas aeruginosa (strain ATCC 15692 / DSM 22644 / CIP 104116 / JCM 14847 / LMG 12228 / 1C / PRS 101 / PAO1) protein is Aliphatic sulfonates import ATP-binding protein SsuB 2.